The following is a 46-amino-acid chain: Aspartate aminotransferase 1 (46 aa).

It belongs to the class-I pyridoxal-phosphate-dependent aminotransferase family. In terms of assembly, homodimer. It depends on pyridoxal 5'-phosphate as a cofactor.

The catalysed reaction is L-aspartate + 2-oxoglutarate = oxaloacetate + L-glutamate. Functionally, important for the metabolism of amino acids and Krebs-cycle related organic acids. In plants, it is involved in nitrogen metabolism and in aspects of carbon and energy metabolism. In Pseudotsuga menziesii (Douglas-fir), this protein is Aspartate aminotransferase 1.